A 305-amino-acid chain; its full sequence is Methionyl-tRNA formyltransferase (305 aa).

108–111 (SLLP) serves as a coordination point for (6S)-5,6,7,8-tetrahydrofolate.

The protein belongs to the Fmt family.

The catalysed reaction is L-methionyl-tRNA(fMet) + (6R)-10-formyltetrahydrofolate = N-formyl-L-methionyl-tRNA(fMet) + (6S)-5,6,7,8-tetrahydrofolate + H(+). Its function is as follows. Attaches a formyl group to the free amino group of methionyl-tRNA(fMet). The formyl group appears to play a dual role in the initiator identity of N-formylmethionyl-tRNA by promoting its recognition by IF2 and preventing the misappropriation of this tRNA by the elongation apparatus. The polypeptide is Methionyl-tRNA formyltransferase (Thermus thermophilus (strain ATCC 27634 / DSM 579 / HB8)).